A 373-amino-acid polypeptide reads, in one-letter code: Protein-glutamate methylesterase/protein-glutamine glutaminase 1 (373 aa).

The Response regulatory domain maps to 16–133 (RVVVVDDSAL…ASGLTELSDQ (118 aa)). Position 67 is a 4-aspartylphosphate (D67). In terms of domain architecture, CheB-type methylesterase spans 175–367 (RVSTEKLICI…PALIAKLSSA (193 aa)). Active-site residues include S187, H213, and D309.

It belongs to the CheB family. Post-translationally, phosphorylated by CheA. Phosphorylation of the N-terminal regulatory domain activates the methylesterase activity.

It localises to the cytoplasm. The enzyme catalyses [protein]-L-glutamate 5-O-methyl ester + H2O = L-glutamyl-[protein] + methanol + H(+). It catalyses the reaction L-glutaminyl-[protein] + H2O = L-glutamyl-[protein] + NH4(+). Involved in chemotaxis. Part of a chemotaxis signal transduction system that modulates chemotaxis in response to various stimuli. Catalyzes the demethylation of specific methylglutamate residues introduced into the chemoreceptors (methyl-accepting chemotaxis proteins or MCP) by CheR. Also mediates the irreversible deamidation of specific glutamine residues to glutamic acid. The protein is Protein-glutamate methylesterase/protein-glutamine glutaminase 1 of Albidiferax ferrireducens (strain ATCC BAA-621 / DSM 15236 / T118) (Rhodoferax ferrireducens).